A 236-amino-acid polypeptide reads, in one-letter code: Uridylate kinase (236 aa).

10-13 contributes to the ATP binding site; it reads KLSG. G52 provides a ligand contact to UMP. Positions 53 and 57 each coordinate ATP. UMP contacts are provided by residues D72 and 133–140; that span reads TGNPFFTT. Positions 160, 166, and 169 each coordinate ATP.

Belongs to the UMP kinase family. Homohexamer.

Its subcellular location is the cytoplasm. It catalyses the reaction UMP + ATP = UDP + ADP. It participates in pyrimidine metabolism; CTP biosynthesis via de novo pathway; UDP from UMP (UMPK route): step 1/1. Inhibited by UTP. In terms of biological role, catalyzes the reversible phosphorylation of UMP to UDP. The sequence is that of Uridylate kinase from Ralstonia nicotianae (strain ATCC BAA-1114 / GMI1000) (Ralstonia solanacearum).